The primary structure comprises 664 residues: Glycine--tRNA ligase beta subunit (664 aa).

This sequence belongs to the class-II aminoacyl-tRNA synthetase family. As to quaternary structure, tetramer of two alpha and two beta subunits.

The protein localises to the cytoplasm. The catalysed reaction is tRNA(Gly) + glycine + ATP = glycyl-tRNA(Gly) + AMP + diphosphate. The polypeptide is Glycine--tRNA ligase beta subunit (Rickettsia felis (strain ATCC VR-1525 / URRWXCal2) (Rickettsia azadi)).